A 336-amino-acid chain; its full sequence is Flavonoid 4'-O-methyltransferase 5 (336 aa).

S-adenosyl-L-methionine is bound by residues tyrosine 140 and aspartate 203. Residue histidine 241 is the Proton acceptor of the active site.

It belongs to the class I-like SAM-binding methyltransferase superfamily. Cation-independent O-methyltransferase family. As to quaternary structure, homodimer. Expressed in leaves.

It carries out the reaction genkwanin + S-adenosyl-L-methionine = apigenin 4',7-dimethyl ether + S-adenosyl-L-homocysteine. The catalysed reaction is cirsiliol + S-adenosyl-L-methionine = eupatorin + S-adenosyl-L-homocysteine + H(+). It catalyses the reaction cirsimaritin + S-adenosyl-L-methionine = salvigenin + S-adenosyl-L-homocysteine + H(+). The enzyme catalyses scutellarein 7-methyl ether + S-adenosyl-L-methionine = ladanein + S-adenosyl-L-homocysteine + H(+). It carries out the reaction (2S)-sakuranetin + S-adenosyl-L-methionine = (2S)-naringenin 4',7-dimethyl ether + S-adenosyl-L-homocysteine + H(+). It functions in the pathway flavonoid metabolism. Substrate inhibition by genkwanin (GENK) at concentrations above 10 mM. Its function is as follows. Flavonoid 4'-O-methyltransferase involved in the biosynthesis of polymethoxylated flavonoids natural products such as nevadensin and salvigenin, aroma compounds which contribute to the flavor of sweet basil, and exhibit pharmacological activities such as anti-allergic, anti-oxidant, antibacterial, anti-proliferative, and anti-inflammatory effects. Catalyzes S-adenosylmethionine-dependent regioselective 4'-O-methylation of flavonoids; active on various hydroxylated flavonoid substrates, including scutellarein-7-methyl ether (SCU7Me) and, with a lower efficiency, cirsimaritin (CIRM), sakuranetin (NAR7Me), ladanein (LAD) and genkwanin (GENK). The polypeptide is Flavonoid 4'-O-methyltransferase 5 (Ocimum basilicum (Sweet basil)).